Reading from the N-terminus, the 883-residue chain is MASPGAGRAPPELPERNCGYREVEYWDQRYQGAADSAPYDWFGDFSSFRALLEPELRPEDRILVLGCGNSALSYELFLGGFPNVTSVDYSSVVVAAMQARHAHVPQLRWETMDVRKLDFPSASFDVVLEKGTLDALLAGERDPWTVSSEGVHTVDQVLSEVGFQKGTRQLLGSRTQLELVLAGASLLLAALLLGCLVALGVQYHRDPSHSTCLTEACIRVAGKILESLDRGVSPCEDFYQFSCGGWIRRNPLPDGRSRWNTFNSLWDQNQAILKHLLENTTFNSSSEAEQKTQRFYLSCLQVERIEELGAQPLRDLIEKIGGWNITGPWDQDNFMEVLKAVAGTYRATPFFTVYISADSKSSNSNVIQVDQSGLFLPSRDYYLNRTANEKVLTAYLDYMEELGMLLGGRPTSTREQMQQVLELEIQLANITVPQDQRRDEEKIYHKMSISELQALAPSMDWLEFLSFLLSPLELSDSEPVVVYGMDYLQQVSELINRTEPSILNNYLIWNLVQKTTSSLDRRFESAQEKLLETLYGTKKSCVPRWQTCISNTDDALGFALGSLFVKATFDRQSKEIAEGMISEIRTAFEEALGQLVWMDEKTRQAAKEKADAIYDMIGFPDFILEPKELDDVYDGYEISEDSFFQNMLNLYNFSAKVMADQLRKPPSRDQWSMTPQTVNAYYLPTKNEIVFPAGILQAPFYARNHPKALNFGGIGVVMGHELTHAFDDQGREYDKEGNLRPWWQNESLAAFRNHTACMEEQYNQYQVNGERLNGRQTLGENIADNGGLKAAYNAYKAWLRKHGEEQQLPAVGLTNHQLFFVGFAQVWCSVRTPESSHEGLVTDPHSPARFRVLGTLSNSRDFLRHFGCPVGSPMNPGQLCEVW.

Residues 1–160 (MASPGAGRAP…VHTVDQVLSE (160 aa)) are methyltransferase-like region. The Cytoplasmic segment spans residues 1–178 (MASPGAGRAP…QLLGSRTQLE (178 aa)). Residues Trp-26 and Tyr-30 each contribute to the S-adenosyl-L-methionine site. Tyr-39 is subject to Phosphotyrosine. S-adenosyl-L-methionine contacts are provided by residues Trp-41, Gly-66, 88–89 (DY), 113–114 (DV), and Lys-130. The chain crosses the membrane as a helical span at residues 179–199 (LVLAGASLLLAALLLGCLVAL). The Lumenal segment spans residues 200-883 (GVQYHRDPSH…MNPGQLCEVW (684 aa)). A Peptidase M13 domain is found at 211–883 (TCLTEACIRV…MNPGQLCEVW (673 aa)). Intrachain disulfides connect Cys-212–Cys-217, Cys-235–Cys-868, Cys-243–Cys-828, Cys-299–Cys-548, and Cys-757–Cys-880. N-linked (GlcNAc...) asparagine glycosylation is found at Asn-279, Asn-283, Asn-324, Asn-384, Asn-429, Asn-496, and Asn-652. His-720 contributes to the Zn(2+) binding site. The active site involves Glu-721. His-724 is a binding site for Zn(2+). 2 N-linked (GlcNAc...) asparagine glycosylation sites follow: Asn-745 and Asn-753. Glu-780 contributes to the Zn(2+) binding site. Asp-784 acts as the Proton donor in catalysis.

It in the N-terminal section; belongs to the methyltransferase superfamily. The protein in the C-terminal section; belongs to the peptidase M13 family. Requires Zn(2+) as cofactor.

Its subcellular location is the golgi apparatus membrane. It is found in the cytoplasmic vesicle. It localises to the secretory vesicle membrane. The catalysed reaction is Hydrolysis of the 21-Trp-|-Val-22 bond in big endothelin to form endothelin 1.. Inhibited by phosphoramidon. In terms of biological role, converts big endothelin-1 to endothelin-1. May also have methyltransferase activity. May play a role in amyloid-beta processing. The chain is EEF1AKMT4-ECE2 readthrough transcript protein from Homo sapiens (Human).